Reading from the N-terminus, the 321-residue chain is GTP 3',8-cyclase (321 aa).

The 229-residue stretch at 5 to 233 (SFNRVIDYIR…QGSSKIYTLE (229 aa)) folds into the Radical SAM core domain. Residue arginine 14 coordinates GTP. Residues cysteine 21 and cysteine 25 each contribute to the [4Fe-4S] cluster site. Residue tyrosine 27 participates in S-adenosyl-L-methionine binding. Cysteine 28 is a [4Fe-4S] cluster binding site. Arginine 64 lines the GTP pocket. Glycine 68 is a binding site for S-adenosyl-L-methionine. Serine 95 serves as a coordination point for GTP. Serine 119 contacts S-adenosyl-L-methionine. Lysine 155 is a binding site for GTP. Methionine 189 contacts S-adenosyl-L-methionine. Positions 249 and 252 each coordinate [4Fe-4S] cluster. 254-256 (RIR) lines the GTP pocket. Cysteine 266 lines the [4Fe-4S] cluster pocket.

This sequence belongs to the radical SAM superfamily. MoaA family. Monomer and homodimer. [4Fe-4S] cluster is required as a cofactor.

The enzyme catalyses GTP + AH2 + S-adenosyl-L-methionine = (8S)-3',8-cyclo-7,8-dihydroguanosine 5'-triphosphate + 5'-deoxyadenosine + L-methionine + A + H(+). It functions in the pathway cofactor biosynthesis; molybdopterin biosynthesis. Catalyzes the cyclization of GTP to (8S)-3',8-cyclo-7,8-dihydroguanosine 5'-triphosphate. The chain is GTP 3',8-cyclase from Helicobacter pylori (strain ATCC 700392 / 26695) (Campylobacter pylori).